Here is a 295-residue protein sequence, read N- to C-terminus: Large ribosomal subunit protein uL2 (295 aa).

A disordered region spans residues 243–295 (WRPHTRGTAMNPVDHPHGGGEGRTRGKHPESPWDGRRRDTRREGVRSTPISLS). A compositionally biased stretch (basic and acidic residues) spans 256–287 (DHPHGGGEGRTRGKHPESPWDGRRRDTRREGV).

It belongs to the universal ribosomal protein uL2 family. As to quaternary structure, part of the 50S ribosomal subunit. Forms a bridge to the 30S subunit in the 70S ribosome.

Functionally, one of the primary rRNA binding proteins. Required for association of the 30S and 50S subunits to form the 70S ribosome, for tRNA binding and peptide bond formation. It has been suggested to have peptidyltransferase activity; this is somewhat controversial. Makes several contacts with the 16S rRNA in the 70S ribosome. The polypeptide is Large ribosomal subunit protein uL2 (Aquifex pyrophilus).